The primary structure comprises 654 residues: Cytochrome B pre-mRNA-processing protein 1 (654 aa).

The protein resides in the mitochondrion. Functionally, responsible for conferring a stable 5'-end on cytochrome b mRNA. In Saccharomyces cerevisiae (strain ATCC 204508 / S288c) (Baker's yeast), this protein is Cytochrome B pre-mRNA-processing protein 1 (CBP1).